Consider the following 130-residue polypeptide: Small ribosomal subunit protein uS11c (130 aa).

Belongs to the universal ribosomal protein uS11 family. As to quaternary structure, part of the 30S ribosomal subunit.

Its subcellular location is the plastid. The protein localises to the chloroplast. This is Small ribosomal subunit protein uS11c from Physcomitrium patens (Spreading-leaved earth moss).